The sequence spans 255 residues: Ribonuclease HII (255 aa).

Residues 72–255 (RLIAGIDEVG…RTFAPIKDMI (184 aa)) form the RNase H type-2 domain. Residues D78, E79, and D170 each coordinate a divalent metal cation.

Belongs to the RNase HII family. Mn(2+) is required as a cofactor. Requires Mg(2+) as cofactor.

It is found in the cytoplasm. It carries out the reaction Endonucleolytic cleavage to 5'-phosphomonoester.. Its function is as follows. Endonuclease that specifically degrades the RNA of RNA-DNA hybrids. The sequence is that of Ribonuclease HII from Enterococcus faecalis (strain ATCC 700802 / V583).